Here is a 126-residue protein sequence, read N- to C-terminus: Large-conductance mechanosensitive channel (126 aa).

A run of 2 helical transmembrane segments spans residues 14–34 (VLDL…VKSL) and 69–89 (GAFL…FLLV).

The protein belongs to the MscL family. As to quaternary structure, homopentamer.

Its subcellular location is the cell membrane. Channel that opens in response to stretch forces in the membrane lipid bilayer. May participate in the regulation of osmotic pressure changes within the cell. The sequence is that of Large-conductance mechanosensitive channel from Leuconostoc citreum (strain KM20).